The chain runs to 110 residues: PHD finger-like domain-containing protein 5A (110 aa).

Position 2 is an N-acetylalanine (alanine 2). Residue lysine 3 is modified to N6-acetyllysine. Zn(2+)-binding residues include cysteine 11, cysteine 23, cysteine 26, cysteine 30, cysteine 33, cysteine 46, cysteine 49, cysteine 58, cysteine 61, cysteine 72, and cysteine 75. Residues 35–51 form an interaction with SF3B1 and SF3B3 region; the sequence is SYVRPCTLVRICDECNY. Residues 79 to 82 form an interaction with SF3B3 region; that stretch reads EKDR. A Zn(2+)-binding site is contributed by cysteine 85. Serine 94 is subject to Phosphoserine.

The protein belongs to the PHF5 family. As to quaternary structure, component of the 17S U2 SnRNP complex, a ribonucleoprotein complex that contains small nuclear RNA (snRNA) U2 and a number of specific proteins. Part of the SF3B subcomplex of the 17S U2 SnRNP complex. SF3B associates with the splicing subcomplex SF3A and a 12S RNA unit to form the U2 small nuclear ribonucleoproteins complex (U2 snRNP). Within the SF3B complex interacts directly with SF3B1 and SF3B3. Component of the minor spliceosome, which splices U12-type introns. Within this complex, interacts with CRIPT. Interacts (via N-terminus) with U2AF1 and SRSF5; acts to bridge the two. Interacts (via C-terminus) with EP400 and DDX1; acts to bridge the two. Interacts with the PAF1 complex (PAF1C) composed of CDC73, PAF1, LEO1, CTR9, RTF1 and SKIC8. Within the PAF1C interacts directly with CDC73 and SKIC8. Interacts with RNA polymerase II. As to expression, expressed in primary spermatocytes (at protein level). Ubiquitously expressed in pre- and postnatal tissues. Highly expressed in pluripotent embryonic stem cells (ESCs) (at protein level) and induced pluripotent stem cells (iPSCs).

It is found in the nucleus. Its subcellular location is the nucleus speckle. Functionally, component of the 17S U2 SnRNP complex of the spliceosome, a large ribonucleoprotein complex that removes introns from transcribed pre-mRNAs. The 17S U2 SnRNP complex (1) directly participates in early spliceosome assembly and (2) mediates recognition of the intron branch site during pre-mRNA splicing by promoting the selection of the pre-mRNA branch-site adenosine, the nucleophile for the first step of splicing. Within the 17S U2 SnRNP complex, PHF5A is part of the SF3B subcomplex, which is required for 'A' complex assembly formed by the stable binding of U2 snRNP to the branchpoint sequence in pre-mRNA. Sequence independent binding of SF3A and SF3B subcomplexes upstream of the branch site is essential, it may anchor U2 snRNP to the pre-mRNA. Also acts as a component of the minor spliceosome, which is involved in the splicing of U12-type introns in pre-mRNAs. Also involved in elongation by RNA polymerase II as part of the PAF1 complex (PAF1C). PAF1C is required for maintenance of embryonic stem cell (ESC) self-renewal and cellular reprogramming of stem cells. Maintains pluripotency by recruiting and stabilizing PAF1C on pluripotency genes loci, and by regulating the expression of the pluripotency genes. Regulates the deposition of elongation-associated histone modifications, including dimethylated histone H3 'Lys-79' (H3K79me2) and trimethylated histone H3 'Lys-36' (H3K36me3), on PAF1C targets, self-renewal and pluripotency genes. Regulates RNA polymerase II promoter-proximal pause release of the PAF1C targets and self-renewal genes, and the levels of elongating ('Ser-2' phosphorylated) RNA polymerase II in their gene bodies. Regulates muscle specification in adult stem cells by stabilizing PAF1C in chromatin to promote myogenic differentiation. Acts as a transcriptional regulator by binding to the GJA1/Cx43 promoter and enhancing its up-regulation by ESR1/ER-alpha. This Mus musculus (Mouse) protein is PHD finger-like domain-containing protein 5A (Phf5a).